Reading from the N-terminus, the 1349-residue chain is Aldehyde oxidase 2 (1349 aa).

Residues 8 to 96 (DELVFFVNGR…GAAVTTVEGV (89 aa)) form the 2Fe-2S ferredoxin-type domain. [2Fe-2S] cluster-binding residues include C47, C52, C55, and C78. Q117 lines the Mo-molybdopterin pocket. The [2Fe-2S] cluster site is built by C118, C121, C153, and C155. Residue C155 participates in Mo-molybdopterin binding. In terms of domain architecture, FAD-binding PCMH-type spans 240–425 (FYGERVTWIS…ESVHIPHSQK (186 aa)). Residues 268–275 (LVVGNTSL), A349, S358, H362, D371, and L415 each bind FAD. Mo-molybdopterin is bound by residues 816–817 (GF), 1098–1101 (ASVG), Q1213, and L1278. The active-site Proton acceptor; for azaheterocycle hydroxylase activity is E1280.

It belongs to the xanthine dehydrogenase family. Homodimer. [2Fe-2S] cluster is required as a cofactor. It depends on FAD as a cofactor. Requires Mo-molybdopterin as cofactor. Only detected at very few levels in nasal mucosa.

It is found in the cytoplasm. The enzyme catalyses an aldehyde + O2 + H2O = a carboxylate + H2O2 + H(+). In terms of biological role, oxidase with broad substrate specificity, oxidizing aromatic azaheterocycles, such as phthalazine, as well as aldehydes, such as benzaldehyde and retinal. This chain is Aldehyde oxidase 2 (AOX2), found in Macaca fascicularis (Crab-eating macaque).